The chain runs to 267 residues: Undecaprenyl-diphosphatase (267 aa).

The next 7 membrane-spanning stretches (helical) occupy residues 1–21, 49–69, 83–103, 111–131, 190–210, 219–239, and 245–265; these read MTLF…FLPV, VGTL…AVAG, AFLA…GLAL, ALRS…VLYW, MLMS…EVAA, DAAI…TLMM, and VSFT…LIIA.

It belongs to the UppP family.

The protein localises to the cell inner membrane. It catalyses the reaction di-trans,octa-cis-undecaprenyl diphosphate + H2O = di-trans,octa-cis-undecaprenyl phosphate + phosphate + H(+). Catalyzes the dephosphorylation of undecaprenyl diphosphate (UPP). Confers resistance to bacitracin. The sequence is that of Undecaprenyl-diphosphatase from Dinoroseobacter shibae (strain DSM 16493 / NCIMB 14021 / DFL 12).